The chain runs to 213 residues: Thymidylate kinase (213 aa).

Residue 10–17 (GPDGAGKT) coordinates ATP.

The protein belongs to the thymidylate kinase family.

It catalyses the reaction dTMP + ATP = dTDP + ADP. In terms of biological role, phosphorylation of dTMP to form dTDP in both de novo and salvage pathways of dTTP synthesis. This is Thymidylate kinase from Limosilactobacillus reuteri (strain DSM 20016) (Lactobacillus reuteri).